Consider the following 282-residue polypeptide: MSSYANHQALAGLTLGKSTDYRDTYDASLLQGVPRSLNRDPLGLKADNLPFHGTDIWTLYELSWLNAKGLPQVAVGHVELDYTSVNLIESKSFKLYLNSFNQTRFNNWDEVRQTLERDLSTCAQGKISVALYRLDELEGQPIGHFNGTCIDDQDITIDNYEFTTDYLENATCGEKVVEETLVSHLLKSNCLITHQPDWGSIQIQYRGRQIDREKLLRYLVSFRHHNEFHEQCVERIFNDLLRFCQPEKLSVYARYTRRGGLDINPWRSNSDFVPSTTRLVRQ.

Residue 88-90 (IES) coordinates substrate. 90 to 91 (SK) contacts NADPH. Residue Cys190 is the Thioimide intermediate of the active site. The active-site Proton donor is the Asp197. Residue 229-230 (HE) participates in substrate binding. 258–259 (RG) contacts NADPH.

The protein belongs to the GTP cyclohydrolase I family. QueF type 2 subfamily. Homodimer.

Its subcellular location is the cytoplasm. The catalysed reaction is 7-aminomethyl-7-carbaguanine + 2 NADP(+) = 7-cyano-7-deazaguanine + 2 NADPH + 3 H(+). The protein operates within tRNA modification; tRNA-queuosine biosynthesis. Its function is as follows. Catalyzes the NADPH-dependent reduction of 7-cyano-7-deazaguanine (preQ0) to 7-aminomethyl-7-deazaguanine (preQ1). The chain is NADPH-dependent 7-cyano-7-deazaguanine reductase from Escherichia coli O9:H4 (strain HS).